We begin with the raw amino-acid sequence, 620 residues long: Acetylcholinesterase 1 (620 aa).

The N-terminal stretch at 1-31 (MRYSLLFFIFLPCVITAVDLIHLHDGSPLFG) is a signal peptide. N-linked (GlcNAc...) asparagine glycosylation is present at Asn-74. A disulfide bridge links Cys-82 with Cys-109. The Acyl-ester intermediate role is filled by Ser-216. Cysteines 270 and 286 form a disulfide. N-linked (GlcNAc...) asparagine glycosylation is present at Asn-272. Catalysis depends on charge relay system residues Glu-346 and His-468. Cys-430 and Cys-558 are oxidised to a cystine. Asn-486 and Asn-536 each carry an N-linked (GlcNAc...) asparagine glycan.

The protein belongs to the type-B carboxylesterase/lipase family. In terms of assembly, oligomer composed of disulfide-linked homodimers.

Its subcellular location is the synapse. The protein localises to the secreted. It localises to the cell membrane. The enzyme catalyses acetylcholine + H2O = choline + acetate + H(+). Rapidly hydrolyzes choline released into the synapse. This is Acetylcholinesterase 1 (ace-1) from Caenorhabditis briggsae.